We begin with the raw amino-acid sequence, 509 residues long: Dihydrolipoyl dehydrogenase, mitochondrial (509 aa).

The transit peptide at 1 to 35 (MQSWSRVYCSLAKRGHFNRISHGLQGLSAVPLRTY) directs the protein to the mitochondrion. Position 66 is an N6-acetyllysine; alternate (Lys-66). Residue Lys-66 is modified to N6-succinyllysine; alternate. Residues 71–80 (EKNETLGGTC) and Lys-89 each bind FAD. The cysteines at positions 80 and 85 are disulfide-linked. Lys-104, Lys-122, Lys-132, and Lys-143 each carry N6-acetyllysine; alternate. 4 positions are modified to N6-succinyllysine; alternate: Lys-104, Lys-122, Lys-132, and Lys-143. Residue Gly-154 participates in FAD binding. 2 positions are modified to N6-succinyllysine: Lys-159 and Lys-166. Position 183–185 (183–185 (TGS)) interacts with FAD. NAD(+)-binding positions include 220–227 (GAGVIGVE) and Glu-243. An N6-succinyllysine mark is found at Lys-273 and Lys-277. NAD(+) is bound at residue Val-278. A phosphoserine mark is found at Ser-285 and Ser-297. Position 314 (Gly-314) interacts with NAD(+). Lys-346 is modified (N6-acetyllysine). FAD is bound by residues Asp-355 and 361–364 (MLAH). Residue Lys-410 is modified to N6-acetyllysine; alternate. Lys-410 is modified (N6-succinyllysine; alternate). 2 positions are modified to N6-acetyllysine: Lys-417 and Lys-420. An N6-succinyllysine modification is found at Lys-430. His-487 functions as the Proton acceptor in the catalytic mechanism. Residue Ser-502 is modified to Phosphoserine. Lys-505 carries the post-translational modification N6-acetyllysine; alternate. Lys-505 is subject to N6-succinyllysine; alternate.

The protein belongs to the class-I pyridine nucleotide-disulfide oxidoreductase family. As to quaternary structure, homodimer. Part of the multimeric pyruvate dehydrogenase complex that contains multiple copies of pyruvate dehydrogenase (subunits PDHA (PDHA1 or PDHA2) and PDHB, E1), dihydrolipoamide acetyltransferase (DLAT, E2) and lipoamide dehydrogenase (DLD, E3). These subunits are bound to an inner core composed of about 48 DLAT and 12 PDHX molecules (by non covalent bonds). The 2-oxoglutarate dehydrogenase complex is composed of OGDH (2-oxoglutarate dehydrogenase; E1), DLST (dihydrolipoamide succinyltransferase; E2), DLD (dihydrolipoamide dehydrogenase; E3) and the assembly factor KGD4. It contains multiple copies of the three enzymatic components (E1, E2 and E3). In the nucleus, the 2-oxoglutarate dehydrogenase complex associates with KAT2A. Interacts with PDHX. FAD serves as cofactor. In terms of processing, tyrosine phosphorylated.

It localises to the mitochondrion matrix. The protein localises to the nucleus. It is found in the cell projection. Its subcellular location is the cilium. The protein resides in the flagellum. It localises to the cytoplasmic vesicle. The protein localises to the secretory vesicle. It is found in the acrosome. It carries out the reaction N(6)-[(R)-dihydrolipoyl]-L-lysyl-[protein] + NAD(+) = N(6)-[(R)-lipoyl]-L-lysyl-[protein] + NADH + H(+). Lipoamide dehydrogenase is a component of the glycine cleavage system as well as an E3 component of three alpha-ketoacid dehydrogenase complexes (pyruvate-, alpha-ketoglutarate-, and branched-chain amino acid-dehydrogenase complex). The 2-oxoglutarate dehydrogenase complex is mainly active in the mitochondrion. A fraction of the 2-oxoglutarate dehydrogenase complex also localizes in the nucleus and is required for lysine succinylation of histones: associates with KAT2A on chromatin and provides succinyl-CoA to histone succinyltransferase KAT2A. In monomeric form may have additional moonlighting function as serine protease. Involved in the hyperactivation of spermatazoa during capacitation and in the spermatazoal acrosome reaction. This chain is Dihydrolipoyl dehydrogenase, mitochondrial (DLD), found in Pongo abelii (Sumatran orangutan).